We begin with the raw amino-acid sequence, 373 residues long: Galactoside alpha-(1,2)-fucosyltransferase 1 (373 aa).

At 1–12 (MWPPSRRQLCLA) the chain is on the cytoplasmic side. A helical; Signal-anchor for type II membrane protein membrane pass occupies residues 13–29 (FLLVCALSAFSFLLHLH). The Lumenal portion of the chain corresponds to 30 to 373 (QDLFRNGLAL…GSWRPWRFLG (344 aa)). Asn-66, Asn-301, and Asn-327 each carry an N-linked (GlcNAc...) asparagine glycan.

It belongs to the glycosyltransferase 11 family. As to expression, brain.

The protein localises to the golgi apparatus. Its subcellular location is the golgi stack membrane. It catalyses the reaction a beta-D-galactosyl-(1-&gt;4)-N-acetyl-beta-D-glucosaminyl derivative + GDP-beta-L-fucose = an alpha-L-Fuc-(1-&gt;2)-beta-D-Gal-(1-&gt;4)-beta-D-GlcNAc derivative + GDP + H(+). The enzyme catalyses a ganglioside GA1 + GDP-beta-L-fucose = a ganglioside Fuc-GA1 + GDP + H(+). It carries out the reaction a beta-D-Gal-(1-&gt;3)-beta-D-GlcNAc-(1-&gt;3)-beta-D-Gal-(1-&gt;4)-beta-D-Glc-(1&lt;-&gt;1')-Cer(d18:1(4E)) + GDP-beta-L-fucose = alpha-L-fucosyl-(1-&gt;2)- beta-D-galactosyl-(1-&gt;3)-N-acetyl-beta-D-glucosaminyl-(1-&gt;3)-beta-D-galactosyl-(1-&gt;4)-beta-D-glucosyl-(1&lt;-&gt;1')-N-acylsphing-4-enine + GDP + H(+). The catalysed reaction is a neolactoside nLc4Cer(d18:1(4E)) + GDP-beta-L-fucose = a neolactoside IV(2)-alpha-Fuc-nLc4Cer(d18:1(4E)) + GDP + H(+). It catalyses the reaction a ganglioside GM1 + GDP-beta-L-fucose = a ganglioside Fuc-GM1 + GDP + H(+). The enzyme catalyses beta-D-galactosyl-(1-&gt;3)-N-acetyl-D-galactosamine + GDP-beta-L-fucose = alpha-L-fucosyl-(1-&gt;2)-beta-D-galactosyl-(1-&gt;3)-N-acetyl-D-galactosamine + GDP + H(+). It functions in the pathway protein modification; protein glycosylation. Its function is as follows. Catalyzes the transfer of L-fucose, from a guanosine diphosphate-beta-L-fucose, to the terminal galactose residue of glycoconjugates through an alpha(1,2) linkage leading to H antigen synthesis that is an intermediate substrate in the synthesis of ABO blood group antigens. H antigen is essential for maturation of the glomerular layer of the main olfactory bulb, in cell migration and early cell-cell contacts during tumor associated angiogenesis. Preferentially fucosylates soluble lactose and to a lesser extent fucosylates glycolipids gangliosides GA1 and GM1a. The chain is Galactoside alpha-(1,2)-fucosyltransferase 1 from Oryctolagus cuniculus (Rabbit).